The chain runs to 352 residues: Protein Wnt-11 (352 aa).

The N-terminal stretch at Met-1–Gly-22 is a signal peptide. Asn-38 and Asn-88 each carry an N-linked (GlcNAc...) asparagine glycan. Intrachain disulfides connect Cys-78-Cys-89, Cys-128-Cys-136, Cys-138-Cys-155, Cys-207-Cys-221, and Cys-209-Cys-216. A lipid anchor (O-palmitoleoyl serine; by PORCN) is attached at Ser-213. Tyr-273 and Tyr-280 each carry sulfotyrosine. Intrachain disulfides connect Cys-281–Cys-312, Cys-297–Cys-307, Cys-311–Cys-351, Cys-327–Cys-342, Cys-329–Cys-339, and Cys-334–Cys-335. N-linked (GlcNAc...) asparagine glycosylation is present at Asn-298.

It belongs to the Wnt family. Glycosylation is required for protein secretion. In terms of processing, palmitoleoylation is required for efficient binding to frizzled receptors. Depalmitoleoylation leads to Wnt signaling pathway inhibition. In embryos, expressed in the neural tube, dorsal somite, mesenchymal cells within the dorsal fin, branchial arches and heart muscle, becoming expressed throughout the myocardium by the tadpole stage (stage 45). Prior to neural crest cell migration, expressed in a domain flanking the neural crest on the medial or neural (the opposite side to wnt11b). Weakly expressed in the developing pronephros from stage 25, with expression increasing from stages 30 to 35.

It localises to the secreted. The protein resides in the extracellular space. The protein localises to the extracellular matrix. Ligand for members of the frizzled family of seven transmembrane receptors. Shares much functionality with wnt11b. Signals through a non-canonical Wnt pathway to activate Jun-N-terminal kinase (JNK) to regulate gastrulation movements. Acts in a non-cell-autonomous manner to control neural crest migration, probably acting as an extracellular signal from surrounding tissue, but is not required for neural crest induction. Acts redundantly with wnt11b during pronephros induction. Regulates cardiac morphogenesis through the activation of JNK, but is not required for cardiac differentiation. Essential for dorsal fin development; required for an epithelial to mesenchymal transformation event prior to migration of cells into the fin, and ultimately for maintenance of fin structure. Mediates dorsal fin development through a non-canonical pathway mediated by Ca(2+). The polypeptide is Protein Wnt-11 (Xenopus laevis (African clawed frog)).